Consider the following 431-residue polypeptide: Gamma-glutamyl phosphate reductase (431 aa).

The protein belongs to the gamma-glutamyl phosphate reductase family.

It is found in the cytoplasm. It carries out the reaction L-glutamate 5-semialdehyde + phosphate + NADP(+) = L-glutamyl 5-phosphate + NADPH + H(+). Its pathway is amino-acid biosynthesis; L-proline biosynthesis; L-glutamate 5-semialdehyde from L-glutamate: step 2/2. In terms of biological role, catalyzes the NADPH-dependent reduction of L-glutamate 5-phosphate into L-glutamate 5-semialdehyde and phosphate. The product spontaneously undergoes cyclization to form 1-pyrroline-5-carboxylate. This Methylobacterium sp. (strain 4-46) protein is Gamma-glutamyl phosphate reductase.